The sequence spans 245 residues: MPRYKLIIEYDGAPYCGWQIQDNGPSVQGALETAVKAICGKFVRVNGAGRTDAGVHALAQVAHCDIAKEFAPGRLRDGLNAHLRPHPIGVLSAEIVPDDFEARFSAIKRHYVYRISNRRANLALQIGKVWRLPRRLDTDAMHAAAQRLVGKHDFTTFRDTECQAKSPDKTLDQLDVIRDGDNVSIITSARSFLHSQVRSMVGSLVWVGEGRWSADDLAAALAARRRTACGPVAPPDGLYLVKVDY.

Aspartate 52 serves as the catalytic Nucleophile. Tyrosine 111 contacts substrate.

The protein belongs to the tRNA pseudouridine synthase TruA family. In terms of assembly, homodimer.

The catalysed reaction is uridine(38/39/40) in tRNA = pseudouridine(38/39/40) in tRNA. Formation of pseudouridine at positions 38, 39 and 40 in the anticodon stem and loop of transfer RNAs. In Rhodopseudomonas palustris (strain BisB18), this protein is tRNA pseudouridine synthase A.